Here is a 523-residue protein sequence, read N- to C-terminus: Na(+)/H(+) antiporter NhaB (523 aa).

The next 10 membrane-spanning stretches (helical) occupy residues 28–48 (FLII…WLLV), 51–71 (FIFT…GLLA), 89–109 (LSAN…IYFV), 137–157 (MAAF…VISI), 237–257 (FFIR…ATCV), 302–322 (AIIC…VGLI), 347–367 (TESL…AVII), 390–410 (LFYI…VGTV), 445–465 (VATP…LAPL), and 476–496 (MALP…MYLL).

This sequence belongs to the NhaB Na(+)/H(+) (TC 2.A.34) antiporter family.

It is found in the cell inner membrane. It catalyses the reaction 2 Na(+)(in) + 3 H(+)(out) = 2 Na(+)(out) + 3 H(+)(in). Its function is as follows. Na(+)/H(+) antiporter that extrudes sodium in exchange for external protons. This is Na(+)/H(+) antiporter NhaB from Tolumonas auensis (strain DSM 9187 / NBRC 110442 / TA 4).